The following is a 491-amino-acid chain: MANYFNTLNLRQQLAQLGKCRFMGRDEFADGASYLQGKKVVIVGCGAQGLNQGLNMRDSGLDISYALRKEAIAEKRASWRKATENGFKVGTYEELIPQADLVVNLTPDKQHSDVVRTVQPLMKDGAALGYSHGFNIVEVGEQIRKDITVVMVAPKCPGTEVREEYKRGFGVPTLIAVHPENDPKGEGMAIAKAWAAATGGHRAGVLESSFVAEVKSDLMGEQTILCGMLQAGSLLCFDKLVEEGTDPAYAEKLIQFGWETITEALKQGGITLMMDRLSNPAKLRAYALSEQLKEIMAPLFQKHMDDIISGEFSSGMMADWTNDDKKLLTWREETGKTAFETAPQYEGKIGEQEYFDKGVLMIAMVKAGVELAFETMVDSGIIEESAYYESLHELPLIANTIARKRLYEMNVVISDTAEYGNYLFSYACVPLLKPFMAELQPGDLGKAIPEGAVDNAQLRDVNEAIRSHAIEQVGKKLRGYMTDMKRIAVAG.

The 194-residue stretch at 15 to 208 (AQLGKCRFMG…GGHRAGVLES (194 aa)) folds into the KARI N-terminal Rossmann domain. NADP(+) is bound by residues 45–48 (CGAQ), R68, R76, S78, and 108–110 (DKQ). H132 is an active-site residue. G158 contacts NADP(+). KARI C-terminal knotted domains lie at 209 to 344 (SFVA…TAPQ) and 345 to 484 (YEGK…MTDM). Mg(2+) is bound by residues D217, E221, E389, and E393. S414 contacts substrate.

Belongs to the ketol-acid reductoisomerase family. The cofactor is Mg(2+).

It catalyses the reaction (2R)-2,3-dihydroxy-3-methylbutanoate + NADP(+) = (2S)-2-acetolactate + NADPH + H(+). The enzyme catalyses (2R,3R)-2,3-dihydroxy-3-methylpentanoate + NADP(+) = (S)-2-ethyl-2-hydroxy-3-oxobutanoate + NADPH + H(+). It participates in amino-acid biosynthesis; L-isoleucine biosynthesis; L-isoleucine from 2-oxobutanoate: step 2/4. The protein operates within amino-acid biosynthesis; L-valine biosynthesis; L-valine from pyruvate: step 2/4. Involved in the biosynthesis of branched-chain amino acids (BCAA). Catalyzes an alkyl-migration followed by a ketol-acid reduction of (S)-2-acetolactate (S2AL) to yield (R)-2,3-dihydroxy-isovalerate. In the isomerase reaction, S2AL is rearranged via a Mg-dependent methyl migration to produce 3-hydroxy-3-methyl-2-ketobutyrate (HMKB). In the reductase reaction, this 2-ketoacid undergoes a metal-dependent reduction by NADPH to yield (R)-2,3-dihydroxy-isovalerate. In Escherichia coli (strain 55989 / EAEC), this protein is Ketol-acid reductoisomerase (NADP(+)).